Consider the following 197-residue polypeptide: Recombination protein RecR (197 aa).

The C4-type zinc finger occupies 55–70 (CVQCRDFTESEICTIC). Residues 78-173 (QQLCVVESPA…RPSRLAQGMP (96 aa)) form the Toprim domain.

Belongs to the RecR family.

Its function is as follows. May play a role in DNA repair. It seems to be involved in an RecBC-independent recombinational process of DNA repair. It may act with RecF and RecO. The sequence is that of Recombination protein RecR from Xanthomonas oryzae pv. oryzae (strain MAFF 311018).